We begin with the raw amino-acid sequence, 1477 residues long: Ring canal kelch protein (1477 aa).

3 disordered regions span residues 19-62 (LSNG…PGLG), 76-96 (LLQQ…EGSG), and 108-137 (SQNS…YSNE). Positions 20–46 (SNGNSNNNNQQQQQQQQGQNPQQPAQN) are enriched in low complexity. Ser-108 and Ser-111 each carry phosphoserine. Residues 157–223 (CDVILVADDV…VYTATVEVNE (67 aa)) enclose the BTB domain. Kelch repeat units follow at residues 404 to 449 (ILLV…VLGD), 450 to 496 (KVYA…VLNG), 498 to 543 (IYAV…VVHG), 545 to 592 (LYAV…VLNN), 594 to 639 (LYAV…AHDG), and 641 to 687 (LYVV…MIDK). A non-standard amino acid (selenocysteine) is located at residue Sec-690. Disordered stretches follow at residues 744–841 (PAAP…PQRI), 1119–1200 (HSAA…GNGT), 1291–1326 (RDAN…QYED), 1359–1416 (PLLQ…FKPK), and 1446–1477 (PVSL…EHND). 2 stretches are compositionally biased toward low complexity: residues 763–813 (APIG…ANNN) and 820–839 (AAPA…QQPQ). The span at 1125 to 1137 (IPSSSNINANRTT) shows a compositional bias: polar residues. The span at 1166–1192 (KTTSTGSGKSVTLAKKTSTAAARSSSS) shows a compositional bias: low complexity. Composition is skewed to low complexity over residues 1374–1391 (QQRR…QSQQ) and 1456–1477 (TTSS…EHND).

Both proteins are expressed in ovaries, male testis, ovariectomized females, cuticle, salivary gland and imaginal disks. Kelch short protein is the predominant form and is also expressed in fat bodies. On entry into metamorphosis levels of full-length protein increase in testis and imaginal disks.

Its subcellular location is the cytoplasm. It is found in the cytoskeleton. Functionally, component of ring canals that regulates the flow of cytoplasm between cells. May be involved in the regulation of cytoplasm flow from nurse cells to the oocyte during oogenesis. Binds actin. The protein is Ring canal kelch protein (kel) of Drosophila melanogaster (Fruit fly).